Reading from the N-terminus, the 196-residue chain is Imidazoleglycerol-phosphate dehydratase (196 aa).

This sequence belongs to the imidazoleglycerol-phosphate dehydratase family.

The protein resides in the cytoplasm. The catalysed reaction is D-erythro-1-(imidazol-4-yl)glycerol 3-phosphate = 3-(imidazol-4-yl)-2-oxopropyl phosphate + H2O. It participates in amino-acid biosynthesis; L-histidine biosynthesis; L-histidine from 5-phospho-alpha-D-ribose 1-diphosphate: step 6/9. The polypeptide is Imidazoleglycerol-phosphate dehydratase (Clostridium botulinum (strain Okra / Type B1)).